A 90-amino-acid polypeptide reads, in one-letter code: Non-structural protein NS-S (90 aa).

The segment at 4 to 29 is nucleolar signal; sequence KLSLPGKNLKMQKRRWKPTRMMLTRA.

This sequence belongs to the hantavirus NS-S protein family. Interacts with host MAVS; this interaction may reduce MAVS ubiquitination.

It localises to the host cytoplasm. The protein resides in the host perinuclear region. It is found in the host nucleus. Its function is as follows. Antagonizes host type-I IFN signaling pathway. The sequence is that of Non-structural protein NS-S (N) from Homo sapiens (Human).